Here is a 365-residue protein sequence, read N- to C-terminus: Serine protease 40 (365 aa).

Residues 1-34 (MCGIRAKKSGLGGYGAGLLAALLGVSFLSQHAQT) form the signal peptide. A glycan (N-linked (GlcNAc...) asparagine) is linked at asparagine 44. Residues 69-313 (IYGGQIAGAE…FDKWIKDNKK (245 aa)) enclose the Peptidase S1 domain. A disulfide bond links cysteine 94 and cysteine 110. Residues histidine 109 and aspartate 159 each act as charge relay system in the active site. 3 cysteine pairs are disulfide-bonded: cysteine 193–cysteine 270, cysteine 226–cysteine 249, and cysteine 260–cysteine 288. Residue serine 264 is the Charge relay system of the active site. The segment at 312–343 (KKSSSNSKPGESPHHPGSPENENPEGDNKNQG) is disordered.

Belongs to the peptidase S1 family. In terms of tissue distribution, expressed in testis. More specifically, abundantly expressed in the haploid round spermatid.

It localises to the cytoplasmic vesicle. It is found in the secretory vesicle. Its subcellular location is the acrosome. The protein resides in the secreted. Its function is as follows. May play an important role in the sperm/egg interaction; released during the acrosome reaction. The protein is Serine protease 40 (Prss40) of Mus musculus (Mouse).